Here is a 289-residue protein sequence, read N- to C-terminus: Phosphatidylglycerol--prolipoprotein diacylglyceryl transferase (289 aa).

The next 3 membrane-spanning stretches (helical) occupy residues 13–33 (LGPLAIRWYALAYVAGILLGW), 61–81 (FILWVTLAIIVGGRLGHVLFY), and 99–119 (GGMSFHGGAIGVFLAIILFAM). Arg144 is an a 1,2-diacyl-sn-glycero-3-phospho-(1'-sn-glycerol) binding site. 2 consecutive transmembrane segments (helical) span residues 218 to 238 (GVVMGLFTTFYAVFRISLENV) and 250 to 270 (LGLTMGIYLSIPMLLFGLWLI).

It belongs to the Lgt family.

The protein localises to the cell inner membrane. The enzyme catalyses L-cysteinyl-[prolipoprotein] + a 1,2-diacyl-sn-glycero-3-phospho-(1'-sn-glycerol) = an S-1,2-diacyl-sn-glyceryl-L-cysteinyl-[prolipoprotein] + sn-glycerol 1-phosphate + H(+). Its pathway is protein modification; lipoprotein biosynthesis (diacylglyceryl transfer). Catalyzes the transfer of the diacylglyceryl group from phosphatidylglycerol to the sulfhydryl group of the N-terminal cysteine of a prolipoprotein, the first step in the formation of mature lipoproteins. The sequence is that of Phosphatidylglycerol--prolipoprotein diacylglyceryl transferase from Phenylobacterium zucineum (strain HLK1).